Consider the following 234-residue polypeptide: Enterobactin synthase component D (234 aa).

Positions 107, 109, and 152 each coordinate Mg(2+).

This sequence belongs to the P-Pant transferase superfamily. EntD family. As to quaternary structure, entB, EntD, EntE, and EntF form a multienzyme complex called enterobactin synthase. Requires Mg(2+) as cofactor.

It localises to the membrane. It carries out the reaction apo-[aryl-carrier protein] + CoA = holo-[aryl-carrier protein] + adenosine 3',5'-bisphosphate + H(+). It catalyses the reaction apo-[peptidyl-carrier protein] + CoA = holo-[peptidyl-carrier protein] + adenosine 3',5'-bisphosphate + H(+). Its pathway is siderophore biosynthesis; enterobactin biosynthesis. In terms of biological role, involved in the biosynthesis of the siderophore enterobactin (enterochelin), which is a macrocyclic trimeric lactone of N-(2,3-dihydroxybenzoyl)-serine. The serine trilactone serves as a scaffolding for the three catechol functionalities that provide hexadentate coordination for the tightly ligated iron(2+) atoms. Plays an essential role in the assembly of the enterobactin by catalyzing the transfer of the 4'-phosphopantetheine (Ppant) moiety from coenzyme A to the apo-domains of both EntB (ArCP domain) and EntF (PCP domain) to yield their holo-forms which make them competent for the activation of 2,3-dihydroxybenzoate (DHB) and L-serine, respectively. The chain is Enterobactin synthase component D from Salmonella typhimurium (strain LT2 / SGSC1412 / ATCC 700720).